The primary structure comprises 507 residues: ATP synthase subunit beta (507 aa).

The tract at residues 1–22 is disordered; sequence MSSLANKAKSKGKSSKSKSNVN. 183–190 lines the ATP pocket; the sequence is GGAGVGKT.

It belongs to the ATPase alpha/beta chains family. As to quaternary structure, F-type ATPases have 2 components, CF(1) - the catalytic core - and CF(0) - the membrane proton channel. CF(1) has five subunits: alpha(3), beta(3), gamma(1), delta(1), epsilon(1). CF(0) has three main subunits: a(1), b(2) and c(9-12). The alpha and beta chains form an alternating ring which encloses part of the gamma chain. CF(1) is attached to CF(0) by a central stalk formed by the gamma and epsilon chains, while a peripheral stalk is formed by the delta and b chains.

The protein localises to the cell inner membrane. It carries out the reaction ATP + H2O + 4 H(+)(in) = ADP + phosphate + 5 H(+)(out). In terms of biological role, produces ATP from ADP in the presence of a proton gradient across the membrane. The catalytic sites are hosted primarily by the beta subunits. The sequence is that of ATP synthase subunit beta from Ehrlichia canis (strain Jake).